The primary structure comprises 190 residues: Probable chemoreceptor glutamine deamidase CheD (190 aa).

Belongs to the CheD family.

The enzyme catalyses L-glutaminyl-[protein] + H2O = L-glutamyl-[protein] + NH4(+). Probably deamidates glutamine residues to glutamate on methyl-accepting chemotaxis receptors (MCPs), playing an important role in chemotaxis. The protein is Probable chemoreceptor glutamine deamidase CheD of Acidiphilium cryptum (strain JF-5).